Reading from the N-terminus, the 142-residue chain is Transcriptional regulator MraZ (142 aa).

2 SpoVT-AbrB domains span residues 5–47 (EYNH…PLGE) and 76–119 (ANEV…SKEK).

Belongs to the MraZ family. As to quaternary structure, forms oligomers.

The protein localises to the cytoplasm. It localises to the nucleoid. In Clostridium acetobutylicum (strain ATCC 824 / DSM 792 / JCM 1419 / IAM 19013 / LMG 5710 / NBRC 13948 / NRRL B-527 / VKM B-1787 / 2291 / W), this protein is Transcriptional regulator MraZ.